Reading from the N-terminus, the 407-residue chain is MINVYDILKERGYIKQLTHEEEIRELLGKEKISFYIGFDPTADSLHVGHFLQMMVMAHMQKAGHRPIALVGGGTGMIGDPTGKTDMRKMMTKEQIEYNCNCFKKQLAKIIDFSEDKAIMVNNADWLLNLNYIEFLREIGVHFSVNKMLTAECFKSRLEKGLSFLEFNYMLMQGYDFLELNRKYNCVMELGGDDQWSNILAGVDLIRRKESKSAYGMTFTLLTNSEGKKMGKTESGALWLDPEKTSPYEFYQYWRNVADADVEKCLRLITFLPMDEVRRLSSLEGAEINEAKRVLAFEVTKLIHGEEEAQKAKVAAEALFGGNAKDLGNMPTAYIDKDDLNNPLVDLLAKCEILPSKSEARRLIKQGGLYVNDEKVTDINLVLTEEHVTEDGIMIRRGKKNFNRIVVE.

Y35 provides a ligand contact to L-tyrosine. Residues 40 to 49 (PTADSLHVGH) carry the 'HIGH' region motif. Residues Y168 and Q172 each contribute to the L-tyrosine site. Residues 228–232 (KMGKT) carry the 'KMSKS' region motif. K231 is an ATP binding site. One can recognise an S4 RNA-binding domain in the interval 341–405 (NPLVDLLAKC…RGKKNFNRIV (65 aa)).

It belongs to the class-I aminoacyl-tRNA synthetase family. TyrS type 1 subfamily. As to quaternary structure, homodimer.

Its subcellular location is the cytoplasm. The catalysed reaction is tRNA(Tyr) + L-tyrosine + ATP = L-tyrosyl-tRNA(Tyr) + AMP + diphosphate + H(+). In terms of biological role, catalyzes the attachment of tyrosine to tRNA(Tyr) in a two-step reaction: tyrosine is first activated by ATP to form Tyr-AMP and then transferred to the acceptor end of tRNA(Tyr). The chain is Tyrosine--tRNA ligase from Clostridium botulinum (strain 657 / Type Ba4).